Consider the following 206-residue polypeptide: Ras-related protein Rab7 (206 aa).

GTP-binding positions include 15 to 22 (GDSGVGKT), 63 to 67 (DTAGQ), and 125 to 128 (NKVD). S-geranylgeranyl cysteine attachment occurs at residues cysteine 205 and cysteine 206.

The protein belongs to the small GTPase superfamily. Rab family.

The protein localises to the cell membrane. Its function is as follows. Protein transport. Probably involved in vesicular traffic. The polypeptide is Ras-related protein Rab7 (Cenchrus ciliaris (Buffelgrass)).